A 316-amino-acid chain; its full sequence is Coiled-coil domain-containing protein 130 homolog (316 aa).

The stretch at 182–203 (ANSRLRAEFRQQKKEINGQQEL) forms a coiled coil. Positions 287–316 (KLEETTSSATNEKPISLVGDYSSSDNDSNG) are disordered.

This sequence belongs to the CWC16 family.

The chain is Coiled-coil domain-containing protein 130 homolog from Drosophila melanogaster (Fruit fly).